The primary structure comprises 261 residues: Cytochrome c oxidase subunit 3 (261 aa).

Over 1-15 (MTHQTHAYHMVNPSP) the chain is Mitochondrial matrix. Residues 16–34 (WPLTGALSALLLTSGLIMW) traverse the membrane as a helical segment. The Mitochondrial intermembrane portion of the chain corresponds to 35–40 (FHFNSF). Residues 41–66 (LLVIIGLTCMLLTMYQWWRDIVREGT) form a helical membrane-spanning segment. Residues 67 to 72 (FQGHHT) are Mitochondrial matrix-facing. The helical transmembrane segment at 73 to 105 (PVVQKGLRYGMVLFIVSEVFFFLGFFWAFYHSS) threads the bilayer. Over 106–128 (LAPTPELGGCWPPTGIHPLNPLE) the chain is Mitochondrial intermembrane. The chain crosses the membrane as a helical span at residues 129–152 (VPLLNTSILLASGVSITWAHHSLM). The Mitochondrial matrix segment spans residues 153 to 155 (EGN). Residues 156-183 (RKQMIQALSITILLGIYFTILQASEYYE) traverse the membrane as a helical segment. Residues 184 to 190 (SSFTISD) lie on the Mitochondrial intermembrane side of the membrane. A helical membrane pass occupies residues 191-223 (GVYGSTFFVATGFHGLHVIIGTTFLIVCLLRQF). Residues 224-232 (NFHFTSTHH) lie on the Mitochondrial matrix side of the membrane. A helical transmembrane segment spans residues 233-256 (FGFEAAAWYWHFVDVVWLFLYVSI). Topologically, residues 257–261 (YWWGS) are mitochondrial intermembrane.

Belongs to the cytochrome c oxidase subunit 3 family. As to quaternary structure, component of the cytochrome c oxidase (complex IV, CIV), a multisubunit enzyme composed of 14 subunits. The complex is composed of a catalytic core of 3 subunits MT-CO1, MT-CO2 and MT-CO3, encoded in the mitochondrial DNA, and 11 supernumerary subunits COX4I, COX5A, COX5B, COX6A, COX6B, COX6C, COX7A, COX7B, COX7C, COX8 and NDUFA4, which are encoded in the nuclear genome. The complex exists as a monomer or a dimer and forms supercomplexes (SCs) in the inner mitochondrial membrane with NADH-ubiquinone oxidoreductase (complex I, CI) and ubiquinol-cytochrome c oxidoreductase (cytochrome b-c1 complex, complex III, CIII), resulting in different assemblies (supercomplex SCI(1)III(2)IV(1) and megacomplex MCI(2)III(2)IV(2)).

Its subcellular location is the mitochondrion inner membrane. The catalysed reaction is 4 Fe(II)-[cytochrome c] + O2 + 8 H(+)(in) = 4 Fe(III)-[cytochrome c] + 2 H2O + 4 H(+)(out). Component of the cytochrome c oxidase, the last enzyme in the mitochondrial electron transport chain which drives oxidative phosphorylation. The respiratory chain contains 3 multisubunit complexes succinate dehydrogenase (complex II, CII), ubiquinol-cytochrome c oxidoreductase (cytochrome b-c1 complex, complex III, CIII) and cytochrome c oxidase (complex IV, CIV), that cooperate to transfer electrons derived from NADH and succinate to molecular oxygen, creating an electrochemical gradient over the inner membrane that drives transmembrane transport and the ATP synthase. Cytochrome c oxidase is the component of the respiratory chain that catalyzes the reduction of oxygen to water. Electrons originating from reduced cytochrome c in the intermembrane space (IMS) are transferred via the dinuclear copper A center (CU(A)) of subunit 2 and heme A of subunit 1 to the active site in subunit 1, a binuclear center (BNC) formed by heme A3 and copper B (CU(B)). The BNC reduces molecular oxygen to 2 water molecules using 4 electrons from cytochrome c in the IMS and 4 protons from the mitochondrial matrix. This is Cytochrome c oxidase subunit 3 (MT-CO3) from Osphranter robustus (Wallaroo).